We begin with the raw amino-acid sequence, 301 residues long: ATP synthase gamma chain (301 aa).

The protein belongs to the ATPase gamma chain family. F-type ATPases have 2 components, CF(1) - the catalytic core - and CF(0) - the membrane proton channel. CF(1) has five subunits: alpha(3), beta(3), gamma(1), delta(1), epsilon(1). CF(0) has three main subunits: a, b and c.

It is found in the cell inner membrane. In terms of biological role, produces ATP from ADP in the presence of a proton gradient across the membrane. The gamma chain is believed to be important in regulating ATPase activity and the flow of protons through the CF(0) complex. The chain is ATP synthase gamma chain from Bordetella petrii (strain ATCC BAA-461 / DSM 12804 / CCUG 43448).